Consider the following 331-residue polypeptide: Sucrose operon repressor (331 aa).

Residues 1 to 56 (MASLKDVARLAGVSMMTVSRVMHNAESVRPATRDRVLQAIQTLNYVPDLSARKMRA) form the HTH lacI-type domain. A DNA-binding region (H-T-H motif) is located at residues 4–23 (LKDVARLAGVSMMTVSRVMH).

In terms of biological role, repressor for the csc operon. Binds D-fructose as an inducer. The chain is Sucrose operon repressor (cscR) from Escherichia coli.